The sequence spans 149 residues: Deoxyuridine 5'-triphosphate nucleotidohydrolase (149 aa).

Substrate contacts are provided by residues 66-68 (RSG), asparagine 79, 83-85 (TID), and lysine 93.

The protein belongs to the dUTPase family. Mg(2+) serves as cofactor.

The catalysed reaction is dUTP + H2O = dUMP + diphosphate + H(+). It participates in pyrimidine metabolism; dUMP biosynthesis; dUMP from dCTP (dUTP route): step 2/2. This enzyme is involved in nucleotide metabolism: it produces dUMP, the immediate precursor of thymidine nucleotides and it decreases the intracellular concentration of dUTP so that uracil cannot be incorporated into DNA. In Corynebacterium glutamicum (strain ATCC 13032 / DSM 20300 / JCM 1318 / BCRC 11384 / CCUG 27702 / LMG 3730 / NBRC 12168 / NCIMB 10025 / NRRL B-2784 / 534), this protein is Deoxyuridine 5'-triphosphate nucleotidohydrolase.